Consider the following 254-residue polypeptide: Sensory rhodopsin (254 aa).

The Extracellular segment spans residues 1–4; the sequence is MTGA. The chain crosses the membrane as a helical span at residues 5–26; it reads VTSAYWLAAVAFLIGVGITAAL. Topologically, residues 27 to 35 are cytoplasmic; sequence YAKLEGSRA. A helical membrane pass occupies residues 36-57; the sequence is RTRLAALAVIPGFAGLSYVGMA. Residues 58–71 are Extracellular-facing; that stretch reads LGIGTVTVNGAELV. The helical transmembrane segment at 72-93 threads the bilayer; sequence GLRYVDWVVTTPLLVGFIGYNA. The Cytoplasmic segment spans residues 94–96; sequence GAS. Residues 97–119 form a helical membrane-spanning segment; that stretch reads RRAIAGVMIADALMIVFGAAAVV. Residues 120-123 lie on the Extracellular side of the membrane; that stretch reads SGGT. The helical transmembrane segment at 124-151 threads the bilayer; sequence LKWALFGVSALFHVSLFAYLYVIFPGGI. The Cytoplasmic portion of the chain corresponds to 152–154; the sequence is PDD. A helical membrane pass occupies residues 155–182; the sequence is PMQRGLFSLLKNHVGLLWLAYPFVWLMG. Residues 183–190 are Extracellular-facing; sequence PAGIGFTG. Residues 191–223 form a helical membrane-spanning segment; it reads AVGAALTYAFLDVLAKVPYVYFFYARRQAFIDV. At lysine 206 the chain carries N6-(retinylidene)lysine. The Cytoplasmic portion of the chain corresponds to 224–254; sequence TDSRAAAKGDGPAVGGEAPVATGDDAPTAAD. Residues 231 to 254 form a disordered region; it reads KGDGPAVGGEAPVATGDDAPTAAD.

Belongs to the archaeal/bacterial/fungal opsin family.

The protein localises to the cell membrane. Involved in the control of phototaxis. This is Sensory rhodopsin (sop) from Halorubrum sodomense.